The chain runs to 415 residues: Serine hydroxymethyltransferase (415 aa).

Residues L117 and 121-123 each bind (6S)-5,6,7,8-tetrahydrofolate; that span reads GHL. The residue at position 226 (K226) is an N6-(pyridoxal phosphate)lysine. Residues E241 and 349-351 each bind (6S)-5,6,7,8-tetrahydrofolate; that span reads SPF.

The protein belongs to the SHMT family. As to quaternary structure, homodimer. Requires pyridoxal 5'-phosphate as cofactor.

The protein localises to the cytoplasm. It carries out the reaction (6R)-5,10-methylene-5,6,7,8-tetrahydrofolate + glycine + H2O = (6S)-5,6,7,8-tetrahydrofolate + L-serine. The protein operates within one-carbon metabolism; tetrahydrofolate interconversion. It functions in the pathway amino-acid biosynthesis; glycine biosynthesis; glycine from L-serine: step 1/1. Functionally, catalyzes the reversible interconversion of serine and glycine with tetrahydrofolate (THF) serving as the one-carbon carrier. This reaction serves as the major source of one-carbon groups required for the biosynthesis of purines, thymidylate, methionine, and other important biomolecules. Also exhibits THF-independent aldolase activity toward beta-hydroxyamino acids, producing glycine and aldehydes, via a retro-aldol mechanism. The sequence is that of Serine hydroxymethyltransferase from Geotalea uraniireducens (strain Rf4) (Geobacter uraniireducens).